The chain runs to 553 residues: LIM domain-containing protein B (553 aa).

Positions 43-115 are disordered; the sequence is LTYKDPNVST…SINNNISNNN (73 aa). Residues 99–114 are compositionally biased toward low complexity; the sequence is GPGLPNNSINNNISNN. LIM zinc-binding domains are found at residues 205-262, 263-322, 328-387, 388-447, and 448-505; these read PICG…ELFS, PRCF…RQKR, EICS…KQIL, NICG…FFGR, and QCFK…LPKE. The tract at residues 534–553 is disordered; it reads ELKKERERAAKEKEKESKAK.

It is found in the cytoplasm. The protein localises to the cell cortex. The protein resides in the cytoskeleton. Its function is as follows. Regulates and controls rearrangements of the actin cytoskeleton. Required for tip formation, morphogenesis, cell adhesion and motility, chemotaxis and aggregates formation. May function downstream of paxB. The polypeptide is LIM domain-containing protein B (limB) (Dictyostelium discoideum (Social amoeba)).